The sequence spans 111 residues: Large ribosomal subunit protein eL31 (111 aa).

It belongs to the eukaryotic ribosomal protein eL31 family.

The sequence is that of Large ribosomal subunit protein eL31 (RPL31) from Tetrahymena thermophila (strain SB210).